A 336-amino-acid polypeptide reads, in one-letter code: F420-dependent glucose-6-phosphate dehydrogenase (336 aa).

Asp-39 contacts coenzyme F420-(gamma-Glu)n. The active-site Proton donor is the His-40. Residues Thr-76 and 107-108 (TG) contribute to the coenzyme F420-(gamma-Glu)n site. The Proton acceptor role is filled by Glu-109. Coenzyme F420-(gamma-Glu)n is bound by residues Asn-112, 177–178 (GG), and 180–181 (AV). Residues Thr-195, Lys-198, Lys-259, and Arg-283 each contribute to the substrate site.

The protein belongs to the F420-dependent glucose-6-phosphate dehydrogenase family. In terms of assembly, homodimer.

It catalyses the reaction oxidized coenzyme F420-(gamma-L-Glu)(n) + D-glucose 6-phosphate + H(+) = 6-phospho-D-glucono-1,5-lactone + reduced coenzyme F420-(gamma-L-Glu)(n). Functionally, catalyzes the coenzyme F420-dependent oxidation of glucose 6-phosphate (G6P) to 6-phosphogluconolactone. Appears to have a role in resistance to oxidative stress, via its consumption of G6P that serves as a source of reducing power to combat oxidative stress in mycobacteria. This is F420-dependent glucose-6-phosphate dehydrogenase from Mycobacterium avium (strain 104).